The sequence spans 620 residues: Chaperone protein HscA homolog (620 aa).

Belongs to the heat shock protein 70 family.

Functionally, chaperone involved in the maturation of iron-sulfur cluster-containing proteins. Has a low intrinsic ATPase activity which is markedly stimulated by HscB. This Bordetella pertussis (strain Tohama I / ATCC BAA-589 / NCTC 13251) protein is Chaperone protein HscA homolog.